The primary structure comprises 101 residues: Small ribosomal subunit protein bS6 (101 aa).

This sequence belongs to the bacterial ribosomal protein bS6 family. As to quaternary structure, part of the 30S ribosomal subunit. Forms a tight heterodimer with protein bS18.

In terms of biological role, located on the outer edge of the platform on the body of the 30S subunit. The polypeptide is Small ribosomal subunit protein bS6 (rpsF) (Thermus thermophilus (strain ATCC BAA-163 / DSM 7039 / HB27)).